Reading from the N-terminus, the 87-residue chain is Phosphoribosyl-ATP pyrophosphatase (87 aa).

The protein belongs to the PRA-PH family.

It localises to the cytoplasm. It catalyses the reaction 1-(5-phospho-beta-D-ribosyl)-ATP + H2O = 1-(5-phospho-beta-D-ribosyl)-5'-AMP + diphosphate + H(+). It functions in the pathway amino-acid biosynthesis; L-histidine biosynthesis; L-histidine from 5-phospho-alpha-D-ribose 1-diphosphate: step 2/9. This is Phosphoribosyl-ATP pyrophosphatase from Clavibacter sepedonicus (Clavibacter michiganensis subsp. sepedonicus).